The chain runs to 380 residues: Chaperone protein DnaJ (380 aa).

The J domain maps to 5-70; it reads DYYEVLGVAK…QKRAAYDQYG (66 aa). Residues 140-218 form a CR-type zinc finger; that stretch reads GYDTQIRVPS…CHGAGKVKET (79 aa). Zn(2+) is bound by residues C153, C156, C170, C173, C192, C195, C206, and C209. 4 CXXCXGXG motif repeats span residues 153–160, 170–177, 192–199, and 206–213; these read CEVCHGSG, CPTCSGSG, CPKCHGTG, and CGHCHGAG.

It belongs to the DnaJ family. Homodimer. Requires Zn(2+) as cofactor.

Its subcellular location is the cytoplasm. In terms of biological role, participates actively in the response to hyperosmotic and heat shock by preventing the aggregation of stress-denatured proteins and by disaggregating proteins, also in an autonomous, DnaK-independent fashion. Unfolded proteins bind initially to DnaJ; upon interaction with the DnaJ-bound protein, DnaK hydrolyzes its bound ATP, resulting in the formation of a stable complex. GrpE releases ADP from DnaK; ATP binding to DnaK triggers the release of the substrate protein, thus completing the reaction cycle. Several rounds of ATP-dependent interactions between DnaJ, DnaK and GrpE are required for fully efficient folding. Also involved, together with DnaK and GrpE, in the DNA replication of plasmids through activation of initiation proteins. This is Chaperone protein DnaJ from Paraburkholderia xenovorans (strain LB400).